A 99-amino-acid chain; its full sequence is Malonate decarboxylase acyl carrier protein (99 aa).

O-(phosphoribosyl dephospho-coenzyme A)serine is present on S25.

Belongs to the MdcC family. Covalently binds the prosthetic group of malonate decarboxylase.

It is found in the cytoplasm. Functionally, subunit of malonate decarboxylase, it is an acyl carrier protein to which acetyl and malonyl thioester residues are bound via a 2'-(5''-phosphoribosyl)-3'-dephospho-CoA prosthetic group and turn over during the catalytic mechanism. This Pseudomonas putida (Arthrobacter siderocapsulatus) protein is Malonate decarboxylase acyl carrier protein.